The following is a 237-amino-acid chain: MQQSKEERVHDVFEKISDKYDVMNSVISFQRHKAWRKETMRIMDVKPGSKALDVCCGTADWTIALAEAVGEQGKVVGLDFSENMLSVGKQKVEALQLKQVELLHGNAMELPFEDNTFDYVTIGFGLRNVPDYMHVLKEMTRVVKPGGKVICLETSQPTMIGFRQGYILYFKYIMPLFGKLFAKSYKEYSWLQESASTFPGMKELANMFEKAGLERVQVKPFTFGVAAMHLGMKPESK.

S-adenosyl-L-methionine contacts are provided by residues Thr-58, Asp-79, and 106–107 (NA).

This sequence belongs to the class I-like SAM-binding methyltransferase superfamily. MenG/UbiE family.

The enzyme catalyses a 2-demethylmenaquinol + S-adenosyl-L-methionine = a menaquinol + S-adenosyl-L-homocysteine + H(+). The protein operates within quinol/quinone metabolism; menaquinone biosynthesis; menaquinol from 1,4-dihydroxy-2-naphthoate: step 2/2. Functionally, methyltransferase required for the conversion of demethylmenaquinol (DMKH2) to menaquinol (MKH2). This chain is Demethylmenaquinone methyltransferase, found in Bacillus cereus (strain ATCC 10987 / NRS 248).